The primary structure comprises 196 residues: Neuropeptide prohormone-4 (196 aa).

The N-terminal stretch at 1-25 (MSSPLRMDVTFLLAAIAVTWVCGLK) is a signal peptide. The LDL-receptor class A domain occupies 50-90 (DCDIASPFKCEESPTCLRLFQVCNGRWDCEHGSDEDNALCA). 3 disulfide bridges follow: cysteine 51–cysteine 65, cysteine 59–cysteine 78, and cysteine 72–cysteine 89.

As to expression, expressed by the venom duct.

The protein resides in the secreted. This chain is Neuropeptide prohormone-4, found in Conus victoriae (Queen Victoria cone).